The following is a 116-amino-acid chain: Putative pterin-4-alpha-carbinolamine dehydratase (116 aa).

The protein belongs to the pterin-4-alpha-carbinolamine dehydratase family.

The enzyme catalyses (4aS,6R)-4a-hydroxy-L-erythro-5,6,7,8-tetrahydrobiopterin = (6R)-L-erythro-6,7-dihydrobiopterin + H2O. This chain is Putative pterin-4-alpha-carbinolamine dehydratase, found in Xylella fastidiosa (strain M12).